Here is an 846-residue protein sequence, read N- to C-terminus: Spindle pole body component SPC98 (846 aa).

2 positions are modified to phosphoserine: serine 124 and serine 136.

This sequence belongs to the TUBGCP family. In terms of assembly, interacts with TUB4, SPC72 and SPC97.

It localises to the nucleus. It is found in the cytoplasm. Its subcellular location is the cytoskeleton. The protein resides in the microtubule organizing center. The protein localises to the spindle pole body. Its function is as follows. Involved in microtubule organization by the microtubule organizing center, the spindle pole body (SPB). Probably part of the microtubule attachment site at the SPB. The sequence is that of Spindle pole body component SPC98 (SPC98) from Saccharomyces cerevisiae (strain ATCC 204508 / S288c) (Baker's yeast).